The sequence spans 279 residues: Fatty acid metabolism regulator protein (279 aa).

The region spanning 6 to 74 is the HTH gntR-type domain; sequence KSPAGFAEKY…HGKPTKVNQF (69 aa). Positions 34–53 form a DNA-binding region, H-T-H motif; sequence ERELSELIGVTRTTLREVLQ.

As to quaternary structure, homodimer.

Its subcellular location is the cytoplasm. Functionally, multifunctional regulator of fatty acid metabolism. The chain is Fatty acid metabolism regulator protein from Vibrio cholerae serotype O1 (strain ATCC 39541 / Classical Ogawa 395 / O395).